The primary structure comprises 793 residues: MDAFGIGSSLNQAPVTQDLKKFGDNSTGNTMFDASQYAFFGNDVVEEVELGGLEEEDEILSFTGIAEDFSFDKEEVGDSRLLSDVDDLASTFSKLNREPDVYSNTGPITDRRSSQNSLAAEWTHGEELPNWYGRQILDSDAIKDDKVWSAQPFSSLDRVEQRIPDRTKLYPEPQRQLHQDHNQQQFSSEPILVPKSSFVSYPPPGSISPDQRLGHPNIPYQSGGPQMGSPNFSPFPNLQPQLPSMHHGSPQHTGNRPQFRPALPLNNLPPAQWMNRQNMHPGDSSGIMNNAMLQQPPHQNGLMPPQMQGSQNRLPHPMQPPLGHMPGMQPQLFNSHLSRSSSSGNYDGMLGFGDLREVRPGSGHGNRQNVRFPQQGFDAGVQRRYPFRSKYMSAGEIENILRMQLVATHSNDPYVDDYYHQACLAKKSAGAKLKHHFCPNHLRDLQQRARSNNEPHAFLQVEALGRVPFSSIRRPRPLLEVDPPNSAKFGNAEHKPTDKPLDQEPMLAARVYIEDGLCLLLEVDDIDRFLEFNQLQDGGHQLKQRRQALLQSLAVSLQLGDPLAKNGQSQSLDDFLFLRVISLPKGRKLLIRYLQLIFPGSDLMRIVCMAIFRHLRSLFGVLSSDPDIIKTTNKLATVINLCIQNMELGPVSTCLAAVSCSSEQAPLRPLGSPVGDGASTVLKSILDRASELIRANNFNNAGIALWRASFNEFFNMLMRYCISKYDSIMQSLQLPPHFATEISEEAAKAIVREMPIELLRSSFPHIDEQQKRILMEFLKRSMLGSQKTEPVLS.

Phosphoserine is present on residues S200 and S208. Disordered regions lie at residues 203–256 and 292–312; these read PPGS…TGNR and MLQQ…GSQN. The span at 219-242 shows a compositional bias: polar residues; that stretch reads PYQSGGPQMGSPNFSPFPNLQPQL. 2 positions are modified to phosphoserine: S342 and S343. A disordered region spans residues 476 to 501; it reads RPLLEVDPPNSAKFGNAEHKPTDKPL. The span at 491-501 shows a compositional bias: basic and acidic residues; the sequence is NAEHKPTDKPL.

As to quaternary structure, interacts with MPK4 and SUMM2. Post-translationally, phosphorylated at Ser-208 by MPK4 upon flg22 elicitation. Phosphorylated at Ser-200, Ser-342 and Ser-343 upon flg22 elicitation.

It localises to the cytoplasm. The protein localises to the P-body. In terms of biological role, activator of mRNA decapping. Involved in mRNA decay via decapping. Involved in disease resistance in response to biotrophic and necrotrophic pathogens. Is part of a signaling pathway including MPK4 and the disease resistance protein SUMM2. The chain is Protein PAT1 homolog from Arabidopsis thaliana (Mouse-ear cress).